The sequence spans 333 residues: Acetoin:2,6-dichlorophenolindophenol oxidoreductase subunit alpha (333 aa).

As to quaternary structure, tetramer of 2 alpha and 2 beta subunits. Requires thiamine diphosphate as cofactor.

The protein operates within ketone degradation; acetoin degradation. In terms of biological role, catalyzes the 2,6-dichlorophenolindophenol-dependent cleavage of acetoin into acetate and acetaldehyde. The alpha subunit is probably the catalytic subunit of the enzyme. This Bacillus subtilis (strain 168) protein is Acetoin:2,6-dichlorophenolindophenol oxidoreductase subunit alpha (acoA).